Here is a 428-residue protein sequence, read N- to C-terminus: MLDIQFIREHPEVVKESQRKRGESVELVDEVLRADEERRSSLKQFEEARARQKEIGKQVAKAAPDEKAKLIAQTKELSEQVASFKASADTADEQYTTAMWQLSNIVEPQAPEGGEDDYVVMRKVGQIRDFAAEGFEPKDHLTLGEEVAGIDMKRGVKVSGSRFYFLRGDVARLQIAMLTMAVDQAQEHGFILAITPTLVRPEVMRGTGFLNSHADEIYRLREPDDDYLVGTSEVALAGMHENEILDLSDGPLRYCGWSSCYRREAGAAGKDTSGIIRVHQFDKVEMFVYAKPENSDAEHQKLLAMEEEMLAKVEVPYRVIDTAAGDLGSSAARKFDCEAWVPTQGRYRELTSTSNCTQYQARRLNIRERVADGGTSPVATLNGTLATTRWLVAILENHQQADGSIEIPKAMRPYMGGKEVIEPRKWEA.

231–233 contributes to the L-serine binding site; sequence TSE. Residues 262–264 and V278 each bind ATP; that span reads RRE. Position 285 (E285) interacts with L-serine. 349 to 352 contacts ATP; the sequence is ELTS. T384 is an L-serine binding site.

Belongs to the class-II aminoacyl-tRNA synthetase family. Type-1 seryl-tRNA synthetase subfamily. Homodimer. The tRNA molecule binds across the dimer.

The protein resides in the cytoplasm. It catalyses the reaction tRNA(Ser) + L-serine + ATP = L-seryl-tRNA(Ser) + AMP + diphosphate + H(+). The catalysed reaction is tRNA(Sec) + L-serine + ATP = L-seryl-tRNA(Sec) + AMP + diphosphate + H(+). The protein operates within aminoacyl-tRNA biosynthesis; selenocysteinyl-tRNA(Sec) biosynthesis; L-seryl-tRNA(Sec) from L-serine and tRNA(Sec): step 1/1. Its function is as follows. Catalyzes the attachment of serine to tRNA(Ser). Is also able to aminoacylate tRNA(Sec) with serine, to form the misacylated tRNA L-seryl-tRNA(Sec), which will be further converted into selenocysteinyl-tRNA(Sec). This Bifidobacterium animalis subsp. lactis (strain AD011) protein is Serine--tRNA ligase.